Here is a 540-residue protein sequence, read N- to C-terminus: Eukaryotic translation initiation factor 3 subunit L (540 aa).

The PCI domain maps to 307–515; the sequence is TFSDILLYIQ…IHIADTKVSH (209 aa).

Belongs to the eIF-3 subunit L family. As to quaternary structure, component of the eukaryotic translation initiation factor 3 (eIF-3) complex. The eIF-3 complex interacts with pix.

Its subcellular location is the cytoplasm. Component of the eukaryotic translation initiation factor 3 (eIF-3) complex, which is involved in protein synthesis of a specialized repertoire of mRNAs and, together with other initiation factors, stimulates binding of mRNA and methionyl-tRNAi to the 40S ribosome. The eIF-3 complex specifically targets and initiates translation of a subset of mRNAs involved in cell proliferation. This Drosophila grimshawi (Hawaiian fruit fly) protein is Eukaryotic translation initiation factor 3 subunit L.